A 452-amino-acid chain; its full sequence is Probable cysteine protease RD21C (452 aa).

Residues 1 to 29 form the signal peptide; the sequence is MATSIKSITLALLIFSVLLISLSLGSVTA. Positions 30–128 are cleaved as a propeptide — activation peptide; sequence TETTRNEAEA…EKYLYKVGDS (99 aa). N82 is a glycosylation site (N-linked (GlcNAc...) asparagine). Cystine bridges form between C150/C192, C184/C226, C284/C335, C363/C375, and C369/C390. Residue C153 is part of the active site. Active-site residues include H290 and N310. Residues 346 to 452 constitute a propeptide, removed in mature form; the sequence is KSSGSNPPKP…KSTNMLVGSA (107 aa).

This sequence belongs to the peptidase C1 family. In terms of assembly, interacts with WSCP.

Probable thiol protease. The sequence is that of Probable cysteine protease RD21C from Arabidopsis thaliana (Mouse-ear cress).